The chain runs to 405 residues: Arginine biosynthesis bifunctional protein ArgJ (405 aa).

Residues T155, K181, T192, E278, N400, and T405 each coordinate substrate. The Nucleophile role is filled by T192.

It belongs to the ArgJ family. As to quaternary structure, heterotetramer of two alpha and two beta chains.

It is found in the cytoplasm. The catalysed reaction is N(2)-acetyl-L-ornithine + L-glutamate = N-acetyl-L-glutamate + L-ornithine. It catalyses the reaction L-glutamate + acetyl-CoA = N-acetyl-L-glutamate + CoA + H(+). It functions in the pathway amino-acid biosynthesis; L-arginine biosynthesis; L-ornithine and N-acetyl-L-glutamate from L-glutamate and N(2)-acetyl-L-ornithine (cyclic): step 1/1. It participates in amino-acid biosynthesis; L-arginine biosynthesis; N(2)-acetyl-L-ornithine from L-glutamate: step 1/4. In terms of biological role, catalyzes two activities which are involved in the cyclic version of arginine biosynthesis: the synthesis of N-acetylglutamate from glutamate and acetyl-CoA as the acetyl donor, and of ornithine by transacetylation between N(2)-acetylornithine and glutamate. The chain is Arginine biosynthesis bifunctional protein ArgJ from Dehalococcoides mccartyi (strain CBDB1).